The sequence spans 209 residues: Large ribosomal subunit protein uL4 (209 aa).

The segment at 46-76 (RGTASTKTRGEVSGGGRKPWRQKGTGRARHG) is disordered. Basic residues predominate over residues 63-76 (KPWRQKGTGRARHG).

It belongs to the universal ribosomal protein uL4 family. Part of the 50S ribosomal subunit.

One of the primary rRNA binding proteins, this protein initially binds near the 5'-end of the 23S rRNA. It is important during the early stages of 50S assembly. It makes multiple contacts with different domains of the 23S rRNA in the assembled 50S subunit and ribosome. Functionally, forms part of the polypeptide exit tunnel. The chain is Large ribosomal subunit protein uL4 from Halothermothrix orenii (strain H 168 / OCM 544 / DSM 9562).